The following is a 543-amino-acid chain: CTP synthase (543 aa).

Positions 1–267 (MKQTKYIFVT…LSPIAEILDL (267 aa)) are amidoligase domain. S15 provides a ligand contact to CTP. S15 provides a ligand contact to UTP. ATP contacts are provided by residues 16-21 (SLGKGI) and D73. 2 residues coordinate Mg(2+): D73 and E141. Residues 148–150 (DIE), 188–193 (KTKPTQ), and K224 each bind CTP. Residues 188–193 (KTKPTQ) and K224 each bind UTP. One can recognise a Glutamine amidotransferase type-1 domain in the interval 292–543 (KIAFVGKYVD…IKAAINYEDN (252 aa)). G354 provides a ligand contact to L-glutamine. The active-site Nucleophile; for glutamine hydrolysis is C381. L-glutamine-binding positions include 382–385 (LGMQ), E405, and R473. Active-site residues include H516 and E518.

The protein belongs to the CTP synthase family. In terms of assembly, homotetramer.

It carries out the reaction UTP + L-glutamine + ATP + H2O = CTP + L-glutamate + ADP + phosphate + 2 H(+). The enzyme catalyses L-glutamine + H2O = L-glutamate + NH4(+). The catalysed reaction is UTP + NH4(+) + ATP = CTP + ADP + phosphate + 2 H(+). It functions in the pathway pyrimidine metabolism; CTP biosynthesis via de novo pathway; CTP from UDP: step 2/2. Allosterically activated by GTP, when glutamine is the substrate; GTP has no effect on the reaction when ammonia is the substrate. The allosteric effector GTP functions by stabilizing the protein conformation that binds the tetrahedral intermediate(s) formed during glutamine hydrolysis. Inhibited by the product CTP, via allosteric rather than competitive inhibition. In terms of biological role, catalyzes the ATP-dependent amination of UTP to CTP with either L-glutamine or ammonia as the source of nitrogen. Regulates intracellular CTP levels through interactions with the four ribonucleotide triphosphates. The polypeptide is CTP synthase (Campylobacter jejuni subsp. jejuni serotype O:23/36 (strain 81-176)).